Reading from the N-terminus, the 106-residue chain is uncharacterized protein (106 aa).

Helical transmembrane passes span 5-27 (IFVI…GIII), 42-64 (AVAA…LAYM), and 76-98 (LPYI…TNFF).

It localises to the cell membrane. This is an uncharacterized protein from Archaeoglobus fulgidus (strain ATCC 49558 / DSM 4304 / JCM 9628 / NBRC 100126 / VC-16).